A 591-amino-acid chain; its full sequence is 2-succinyl-5-enolpyruvyl-6-hydroxy-3-cyclohexene-1-carboxylate synthase (591 aa).

This sequence belongs to the TPP enzyme family. MenD subfamily. As to quaternary structure, homodimer. Mg(2+) serves as cofactor. Mn(2+) is required as a cofactor. It depends on thiamine diphosphate as a cofactor.

It carries out the reaction isochorismate + 2-oxoglutarate + H(+) = 5-enolpyruvoyl-6-hydroxy-2-succinyl-cyclohex-3-ene-1-carboxylate + CO2. It participates in quinol/quinone metabolism; 1,4-dihydroxy-2-naphthoate biosynthesis; 1,4-dihydroxy-2-naphthoate from chorismate: step 2/7. Its pathway is cofactor biosynthesis; phylloquinone biosynthesis. Functionally, catalyzes the thiamine diphosphate-dependent decarboxylation of 2-oxoglutarate and the subsequent addition of the resulting succinic semialdehyde-thiamine pyrophosphate anion to isochorismate to yield 2-succinyl-5-enolpyruvyl-6-hydroxy-3-cyclohexene-1-carboxylate (SEPHCHC). This chain is 2-succinyl-5-enolpyruvyl-6-hydroxy-3-cyclohexene-1-carboxylate synthase, found in Rippkaea orientalis (strain PCC 8801 / RF-1) (Cyanothece sp. (strain PCC 8801)).